A 545-amino-acid chain; its full sequence is ATP synthase subunit alpha (545 aa).

Position 173-180 (173-180 (GDRQTGKT)) interacts with ATP.

It belongs to the ATPase alpha/beta chains family. As to quaternary structure, F-type ATPases have 2 components, CF(1) - the catalytic core - and CF(0) - the membrane proton channel. CF(1) has five subunits: alpha(3), beta(3), gamma(1), delta(1), epsilon(1). CF(0) has three main subunits: a(1), b(2) and c(9-12). The alpha and beta chains form an alternating ring which encloses part of the gamma chain. CF(1) is attached to CF(0) by a central stalk formed by the gamma and epsilon chains, while a peripheral stalk is formed by the delta and b chains.

The protein localises to the cell membrane. The catalysed reaction is ATP + H2O + 4 H(+)(in) = ADP + phosphate + 5 H(+)(out). Functionally, produces ATP from ADP in the presence of a proton gradient across the membrane. The alpha chain is a regulatory subunit. The sequence is that of ATP synthase subunit alpha from Paenarthrobacter aurescens (strain TC1).